The following is a 481-amino-acid chain: CASP8 and FADD-like apoptosis regulator (481 aa).

DED domains are found at residues Val-6–Lys-78 and Asp-97–Lys-172. The tract at residues Val-6–Lys-200 is interaction with CASP8. Residues Val-6–Ser-229 form an interaction with FADD region. Positions Val-6–Tyr-307 are interaction with CASP8 propeptide. The tract at residues Leu-197–Arg-436 is interaction with CASP3. Residues Leu-197–Thr-481 are interaction with TRAF1 and TRAF2. An interaction with CASP8 subunits p18 and p10 region spans residues Arg-219 to Thr-481. Positions Asp-265–Gln-360 are caspase. Positions Ser-372–Thr-481 are interaction with CASP8.

Belongs to the peptidase C14A family. TNFRSF6 stimulation triggers recruitment to the death-inducing signaling complex (DISC) formed by TNFRSF6, FADD and CASP8. A proteolytic fragment (p43) stays associated with the DISC. Interacts with RIPK1. In terms of processing, proteolytically processed by CASP8 generating subunits p43 and p12. In terms of tissue distribution, highly expressed in heart.

In terms of biological role, apoptosis regulator protein which may function as a crucial link between cell survival and cell death pathways in mammalian cells. Acts as an inhibitor of TNFRSF6 mediated apoptosis. A proteolytic fragment (p43) is likely retained in the death-inducing signaling complex (DISC) thereby blocking further recruitment and processing of caspase-8 at the complex. Full length and shorter isoforms have been shown either to induce apoptosis or to reduce TNFRSF-triggered apoptosis. Lacks enzymatic (caspase) activity. This chain is CASP8 and FADD-like apoptosis regulator (Cflar), found in Mus musculus (Mouse).